A 217-amino-acid polypeptide reads, in one-letter code: uncharacterized protein (217 aa).

A helical membrane pass occupies residues 26–48 (VFMRGYVVGLVLALMLVTAPAMA).

It is found in the membrane. This is an uncharacterized protein from Archaeoglobus fulgidus (strain ATCC 49558 / DSM 4304 / JCM 9628 / NBRC 100126 / VC-16).